We begin with the raw amino-acid sequence, 294 residues long: Glutamate-binding protein GluB (294 aa).

The signal sequence occupies residues 1 to 26 (MSHKRMFTRLAAATSAAVLAGITLTA). C27 carries N-palmitoyl cysteine lipidation. The S-diacylglycerol cysteine moiety is linked to residue C27.

It belongs to the bacterial solute-binding protein 3 family. In terms of assembly, the complex is composed of two ATP-binding proteins (GluA), two transmembrane proteins (GluC and GluD) and a solute-binding protein (GluB).

It localises to the cell membrane. In terms of biological role, part of the ABC transporter complex GluABCD involved in glutamate uptake. Binds glutamate with a high affinity. The protein is Glutamate-binding protein GluB of Corynebacterium efficiens (strain DSM 44549 / YS-314 / AJ 12310 / JCM 11189 / NBRC 100395).